Consider the following 306-residue polypeptide: Manganese-binding lipoprotein MntA (306 aa).

An N-terminal signal peptide occupies residues 1–18 (MRQGLMAAVLFATFALTG). Residue C19 is the site of N-palmitoyl cysteine attachment. C19 carries S-diacylglycerol cysteine lipidation. 4 residues coordinate Mn(2+): H66, H132, H198, and D278.

It belongs to the bacterial solute-binding protein 9 family. In terms of assembly, the complex is probably composed of two ATP-binding proteins (MntB), two transmembrane proteins (MntC and MntD) and a solute-binding protein (MntA). Interacts with FloT.

Its subcellular location is the cell membrane. It localises to the membrane raft. In terms of biological role, probably part of ATP-binding cassette (ABC) transport system MntABCD involved in manganese import. Binds manganese and delivers it to the membrane permease for translocation into the cytoplasm. The chain is Manganese-binding lipoprotein MntA from Bacillus subtilis (strain 168).